The following is a 1179-amino-acid chain: Protein turtle homolog A (1179 aa).

Residues 1 to 20 (MIWCLRLTVLSLIISQGADG) form the signal peptide. Residues 21–734 (RRKPEVVSVV…TQLPGLLPQP (714 aa)) lie on the Extracellular side of the membrane. 5 Ig-like domains span residues 24–124 (PEVV…DFAN), 136–216 (PQFQ…GSIT), 226–318 (PPVI…AYLT), 322–410 (PAQV…SPVT), and 418–502 (PAFI…TNVY). Cystine bridges form between Cys-41–Cys-108 and Cys-158–Cys-206. N-linked (GlcNAc...) asparagine glycans are attached at residues Asn-188, Asn-239, and Asn-256. 3 disulfide bridges follow: Cys-248-Cys-301, Cys-344-Cys-395, and Cys-440-Cys-486. 2 consecutive Fibronectin type-III domains span residues 507 to 611 (SPHV…TTPA) and 623 to 718 (PLSP…TSGL). Asn-513 and Asn-524 each carry an N-linked (GlcNAc...) asparagine glycan. A helical membrane pass occupies residues 735–755 (VLAGVVGGVCFLGVAVLVSIL). The Cytoplasmic segment spans residues 756–1179 (AACLMNRRRA…ISYPEQATLL (424 aa)). The tract at residues 767–807 (RRHRKRLRQDPPLIFSPRGKSGSHSAPGSGSPDSVTKFKLQ) is disordered. A compositionally biased stretch (low complexity) spans 785–800 (GKSGSHSAPGSGSPDS). At Ser-809 the chain carries Phosphoserine. Disordered stretches follow at residues 819–842 (LWGE…PLPL), 942–974 (PPLE…DSPP), and 1016–1079 (APRG…KRRN). A compositionally biased stretch (pro residues) spans 944-954 (LEEPTPAPPPD). Positions 1020 to 1029 (SLTSQSSGRG) are enriched in polar residues. The PDZ-binding motif lies at 1177–1179 (TLL).

It belongs to the immunoglobulin superfamily. Turtle family. As to quaternary structure, interacts with MAGI2 and SHANK1. As to expression, expressed in both cell bodies and dendrites of cortical and hippocampal neurons and also cerebellar Purkinje cells (at protein level).

The protein resides in the cell membrane. The protein localises to the synapse. Functionally, functions in dendrite outgrowth and synapse maturation. The sequence is that of Protein turtle homolog A (Igsf9) from Mus musculus (Mouse).